Consider the following 262-residue polypeptide: Acyl-[acyl-carrier-protein]--UDP-N-acetylglucosamine O-acyltransferase (262 aa).

Belongs to the transferase hexapeptide repeat family. LpxA subfamily. In terms of assembly, homotrimer.

The protein localises to the cytoplasm. It catalyses the reaction a (3R)-hydroxyacyl-[ACP] + UDP-N-acetyl-alpha-D-glucosamine = a UDP-3-O-[(3R)-3-hydroxyacyl]-N-acetyl-alpha-D-glucosamine + holo-[ACP]. Its pathway is glycolipid biosynthesis; lipid IV(A) biosynthesis; lipid IV(A) from (3R)-3-hydroxytetradecanoyl-[acyl-carrier-protein] and UDP-N-acetyl-alpha-D-glucosamine: step 1/6. Involved in the biosynthesis of lipid A, a phosphorylated glycolipid that anchors the lipopolysaccharide to the outer membrane of the cell. In Blochmanniella floridana, this protein is Acyl-[acyl-carrier-protein]--UDP-N-acetylglucosamine O-acyltransferase.